The following is a 108-amino-acid chain: Tubulin-specific chaperone A (108 aa).

An N-acetylalanine modification is found at alanine 2.

The protein belongs to the TBCA family. As to quaternary structure, supercomplex made of cofactors A to E. Cofactors A and D function by capturing and stabilizing tubulin in a quasi-native conformation. Cofactor E binds to the cofactor D-tubulin complex; interaction with cofactor C then causes the release of tubulin polypeptides that are committed to the native state.

Its subcellular location is the cytoplasm. It localises to the cytoskeleton. Its function is as follows. Tubulin-folding protein; involved in the early step of the tubulin folding pathway. This Homo sapiens (Human) protein is Tubulin-specific chaperone A (TBCA).